Reading from the N-terminus, the 887-residue chain is PAN2-PAN3 deadenylation complex subunit PAN3 (887 aa).

The C3H1-type zinc finger occupies 43-71 (GVKLKYCRYYAKDKTCFYGEECQFLHEDP). 3 disordered regions span residues 102 to 147 (AVAG…IPGM), 284 to 307 (QTPN…SNVS), and 325 to 392 (SPAT…SGQV). Residues 122-138 (PGTGAAAGGGGSSGGLD) show a composition bias toward gly residues. Residues 147-498 (MDGGALTDTS…PPPNRIQKSS (352 aa)) form a necessary and sufficient for interaction with PABPC1 but not needed for interaction with PAN2 region. The short motif at 284–299 (QTPNPTASEFIPKGGS) is the PABPC-interacting motif-2 (PAM-2) element. Positions 298–307 (GSTSRLSNVS) are enriched in polar residues. Residues Ser-354 and Ser-361 each carry the phosphoserine modification. Polar residues predominate over residues 363-392 (TPNPASYMVPSSASTSVNNPVSQTPSSGQV). The interval 463 to 750 (QIDQADMPAV…SVNDIMPMIG (288 aa)) is pseudokinase domain. ATP-binding positions include Arg-521, 570-577 (DFHAGGET), and 644-645 (TK). A coiled-coil region spans residues 751–789 (ARFYTQLDAAQMRNDVIEEDLAKEVQNGRLFRLLAKLGT). Residues 790–887 (INERPEFQKD…ELIAAANGQL (98 aa)) form a knob domain region.

Belongs to the protein kinase superfamily. PAN3 family. In terms of assembly, homodimer. Forms a heterotrimer with a catalytic subunit PAN2 to form the poly(A)-nuclease (PAN) deadenylation complex. Interacts (via PAM-2 motif) with poly(A)-binding protein PABPC1 (via PABC domain), conferring substrate specificity of the enzyme complex. Interacts with the GW182 family proteins TNRC6A, TNRC6B and TNRC6. Interacts with YTHDF3. Interacts with PAN2. Interacts (via N-terminus) with PABPC1 at lower efficiency than isoform 3. As to quaternary structure, interacts with PAN2. Interacts (via N-terminus) with PABPC1 at higher efficiency than isoform 1.

Its subcellular location is the cytoplasm. It localises to the P-body. The protein localises to the nucleus. Regulatory subunit of the poly(A)-nuclease (PAN) deadenylation complex, one of two cytoplasmic mRNA deadenylases involved in general and miRNA-mediated mRNA turnover. PAN specifically shortens poly(A) tails of RNA and the activity is stimulated by poly(A)-binding protein (PABP). PAN deadenylation is followed by rapid degradation of the shortened mRNA tails by the CCR4-NOT complex. Deadenylated mRNAs are then degraded by two alternative mechanisms, namely exosome-mediated 3'-5' exonucleolytic degradation, or deadenylation-dependent mRNA decapping and subsequent 5'-3' exonucleolytic degradation by XRN1. PAN3 acts as a regulator for PAN activity, recruiting the catalytic subunit PAN2 to mRNA via its interaction with RNA and PABP, and to miRNA targets via its interaction with GW182 family proteins. Its function is as follows. Decreases PAN2-mediated deadenylation, possibly by preventing progression into the second CCR4-NOT mediated stage of biphasic deadenylation. Has a significant effect on mRNA stability, generally stabilizing a subset of the transcriptome. Stabilizes mRNAs degraded by the AU-rich element (ARE)-mediated mRNA decay pathway but promotes degradation of mRNAs by the microRNA-mediated pathway. Its activity influences mRNP remodeling, specifically reducing formation of a subset of P-bodies containing GW220, an isoform of TNRC6A. In terms of biological role, enhances PAN2 deadenylase activity and has an extensive effect on mRNA stability, generally enhancing mRNA decay across the transcriptome by multiple pathways, including the AU-rich element (ARE)-mediated pathway, microRNA-mediated pathway and the nonsense-mediated pathway (NMD). Its activity is required for efficient P-body formation. May be involved in regulating mRNAs of genes involved in cell cycle progression and cell proliferation. This chain is PAN2-PAN3 deadenylation complex subunit PAN3, found in Homo sapiens (Human).